The primary structure comprises 151 residues: Cytochrome c-type biogenesis protein CcmE (151 aa).

The Cytoplasmic portion of the chain corresponds to 1–8; sequence MNPLRRKR. Residues 9 to 29 form a helical; Signal-anchor for type II membrane protein membrane-spanning segment; it reads LLIILAILVGVGVAVGLALSA. Residues 30–151 lie on the Periplasmic side of the membrane; it reads LQQNINLFYT…QSAPTPAKEG (122 aa). Residues His-124 and Tyr-128 each coordinate heme.

The protein belongs to the CcmE/CycJ family.

The protein localises to the cell inner membrane. Heme chaperone required for the biogenesis of c-type cytochromes. Transiently binds heme delivered by CcmC and transfers the heme to apo-cytochromes in a process facilitated by CcmF and CcmH. The chain is Cytochrome c-type biogenesis protein CcmE from Pseudomonas fluorescens biotype C.